The sequence spans 156 residues: Cell division protein SepF (156 aa).

The segment at 30–49 (NAAAPSTTETSVVRQDDRPK) is disordered.

This sequence belongs to the SepF family. In terms of assembly, homodimer. Interacts with FtsZ.

Its subcellular location is the cytoplasm. Cell division protein that is part of the divisome complex and is recruited early to the Z-ring. Probably stimulates Z-ring formation, perhaps through the cross-linking of FtsZ protofilaments. Its function overlaps with FtsA. The polypeptide is Cell division protein SepF (Exiguobacterium sp. (strain ATCC BAA-1283 / AT1b)).